The chain runs to 130 residues: Small ribosomal subunit protein uS9 (130 aa).

This sequence belongs to the universal ribosomal protein uS9 family.

The chain is Small ribosomal subunit protein uS9 from Magnetococcus marinus (strain ATCC BAA-1437 / JCM 17883 / MC-1).